The sequence spans 94 residues: Co-chaperonin GroES (94 aa).

Belongs to the GroES chaperonin family. In terms of assembly, heptamer of 7 subunits arranged in a ring. Interacts with the chaperonin GroEL.

It localises to the cytoplasm. In terms of biological role, together with the chaperonin GroEL, plays an essential role in assisting protein folding. The GroEL-GroES system forms a nano-cage that allows encapsulation of the non-native substrate proteins and provides a physical environment optimized to promote and accelerate protein folding. GroES binds to the apical surface of the GroEL ring, thereby capping the opening of the GroEL channel. In Streptococcus mitis, this protein is Co-chaperonin GroES.